The chain runs to 499 residues: Probable cytochrome P450 cyp-35D1 (499 aa).

C444 lines the heme pocket.

It belongs to the cytochrome P450 family. It depends on heme as a cofactor. As to expression, expressed in hypodermis, intestine and vulva upon thiabendazole (TBZ) exposure.

In terms of biological role, cytochromes P450 are a group of heme-thiolate monooxygenases. They oxidize a variety of structurally unrelated compounds, including steroids, fatty acids, and xenobiotics. Involved in the oxidative metabolism of thiabendazole (TBZ). Catalyzes the conversion of TBZ to its hydroxylated form. This is Probable cytochrome P450 cyp-35D1 from Caenorhabditis elegans.